Here is a 357-residue protein sequence, read N- to C-terminus: Phenylalanine--tRNA ligase alpha subunit (357 aa).

Glu258 contacts Mg(2+).

Belongs to the class-II aminoacyl-tRNA synthetase family. Phe-tRNA synthetase alpha subunit type 1 subfamily. As to quaternary structure, tetramer of two alpha and two beta subunits. Mg(2+) is required as a cofactor.

The protein resides in the cytoplasm. The catalysed reaction is tRNA(Phe) + L-phenylalanine + ATP = L-phenylalanyl-tRNA(Phe) + AMP + diphosphate + H(+). The chain is Phenylalanine--tRNA ligase alpha subunit from Caulobacter vibrioides (strain ATCC 19089 / CIP 103742 / CB 15) (Caulobacter crescentus).